The primary structure comprises 122 residues: Small ribosomal subunit protein uS13 (122 aa).

The disordered stretch occupies residues 95 to 122; it reads GLPVRGQRTHTNARTRKGKAKPIAGKKK.

This sequence belongs to the universal ribosomal protein uS13 family. Part of the 30S ribosomal subunit. Forms a loose heterodimer with protein S19. Forms two bridges to the 50S subunit in the 70S ribosome.

In terms of biological role, located at the top of the head of the 30S subunit, it contacts several helices of the 16S rRNA. In the 70S ribosome it contacts the 23S rRNA (bridge B1a) and protein L5 of the 50S subunit (bridge B1b), connecting the 2 subunits; these bridges are implicated in subunit movement. Contacts the tRNAs in the A and P-sites. This is Small ribosomal subunit protein uS13 from Zymomonas mobilis subsp. mobilis (strain ATCC 31821 / ZM4 / CP4).